The chain runs to 135 residues: Galectin-1 (135 aa).

A2 is modified (N-acetylalanine). One can recognise a Galectin domain in the interval 4 to 135; the sequence is GLVASNLNLK…DFKIKCVAFD (132 aa). N6-acetyllysine is present on residues K13 and K29. S30 carries the post-translational modification Phosphoserine. Residues 45-49, H53, N62, and 69-72 contribute to the a beta-D-galactoside site; these read HFNPR and WGAE. K108 is subject to N6-acetyllysine; alternate. The residue at position 108 (K108) is an N6-succinyllysine; alternate. K128 is modified (N6-acetyllysine).

In terms of assembly, homodimer. Binds LGALS3BP. Interacts with CD2, CD3, CD4, CD6, CD7, CD43, ALCAM and CD45. Interacts with laminin (via poly-N-acetyllactosamine). Interacts with SUSD2. Interacts with cargo receptor TMED10; the interaction mediates the translocation from the cytoplasm into the ERGIC (endoplasmic reticulum-Golgi intermediate compartment) and thereby secretion. Post-translationally, the N-terminus is blocked.

It localises to the secreted. It is found in the extracellular space. The protein localises to the extracellular matrix. Its subcellular location is the cytoplasm. Lectin that binds beta-galactoside and a wide array of complex carbohydrates. Plays a role in regulating apoptosis, cell proliferation and cell differentiation. Inhibits CD45 protein phosphatase activity and therefore the dephosphorylation of Lyn kinase. Strong inducer of T-cell apoptosis. The polypeptide is Galectin-1 (Bubalus bubalis (Domestic water buffalo)).